A 456-amino-acid chain; its full sequence is Enolase (456 aa).

Glutamine 164 lines the (2R)-2-phosphoglycerate pocket. Glutamate 207 (proton donor) is an active-site residue. Residues aspartate 244, glutamate 287, and aspartate 314 each coordinate Mg(2+). Positions 339, 368, 369, and 390 each coordinate (2R)-2-phosphoglycerate. Lysine 339 (proton acceptor) is an active-site residue.

Belongs to the enolase family. As to quaternary structure, component of the RNA degradosome, a multiprotein complex involved in RNA processing and mRNA degradation. Mg(2+) is required as a cofactor.

The protein resides in the cytoplasm. It is found in the secreted. It localises to the cell surface. It catalyses the reaction (2R)-2-phosphoglycerate = phosphoenolpyruvate + H2O. It functions in the pathway carbohydrate degradation; glycolysis; pyruvate from D-glyceraldehyde 3-phosphate: step 4/5. Its function is as follows. Catalyzes the reversible conversion of 2-phosphoglycerate (2-PG) into phosphoenolpyruvate (PEP). It is essential for the degradation of carbohydrates via glycolysis. This is Enolase from Francisella tularensis subsp. holarctica (strain OSU18).